The sequence spans 89 residues: uncharacterized protein (89 aa).

This is an uncharacterized protein from Saccharomyces cerevisiae (strain ATCC 204508 / S288c) (Baker's yeast).